Reading from the N-terminus, the 731-residue chain is Catalase-peroxidase (731 aa).

Residues 98–227 constitute a cross-link (tryptophyl-tyrosyl-methioninium (Trp-Tyr) (with M-254)); that stretch reads WHAAGTYRTA…LAAIQMGLIY (130 aa). His-99 (proton acceptor) is an active-site residue. Positions 227–254 form a cross-link, tryptophyl-tyrosyl-methioninium (Tyr-Met) (with W-98); it reads YVNPEGPQGNPHDDEGMARDMKETFKRM. Residue His-269 coordinates heme b.

The protein belongs to the peroxidase family. Peroxidase/catalase subfamily. In terms of assembly, homodimer or homotetramer. The cofactor is heme b. In terms of processing, formation of the three residue Trp-Tyr-Met cross-link is important for the catalase, but not the peroxidase activity of the enzyme.

The catalysed reaction is H2O2 + AH2 = A + 2 H2O. The enzyme catalyses 2 H2O2 = O2 + 2 H2O. In terms of biological role, bifunctional enzyme with both catalase and broad-spectrum peroxidase activity. The sequence is that of Catalase-peroxidase from Sphingopyxis alaskensis (strain DSM 13593 / LMG 18877 / RB2256) (Sphingomonas alaskensis).